Consider the following 493-residue polypeptide: Lysine--tRNA ligase (493 aa).

Mg(2+) contacts are provided by Glu-402 and Glu-409.

It belongs to the class-II aminoacyl-tRNA synthetase family. In terms of assembly, homodimer. Mg(2+) serves as cofactor.

It is found in the cytoplasm. It catalyses the reaction tRNA(Lys) + L-lysine + ATP = L-lysyl-tRNA(Lys) + AMP + diphosphate. In Fusobacterium nucleatum subsp. nucleatum (strain ATCC 25586 / DSM 15643 / BCRC 10681 / CIP 101130 / JCM 8532 / KCTC 2640 / LMG 13131 / VPI 4355), this protein is Lysine--tRNA ligase.